The chain runs to 416 residues: Probable glucan 1,3-beta-glucosidase A (416 aa).

The signal sequence occupies residues 1–21 (MLYNLSKAVLALSVLAASADA). E209 acts as the Proton donor in catalysis. 2 disulfide bridges follow: C290–C415 and C316–C341. Catalysis depends on E308, which acts as the Nucleophile.

The protein belongs to the glycosyl hydrolase 5 (cellulase A) family. As to quaternary structure, monomer. It depends on Mn(2+) as a cofactor.

It localises to the secreted. The catalysed reaction is Successive hydrolysis of beta-D-glucose units from the non-reducing ends of (1-&gt;3)-beta-D-glucans, releasing alpha-glucose.. Functionally, beta-glucanases participate in the metabolism of beta-glucan, the main structural component of the cell wall. It could also function biosynthetically as a transglycosylase. The protein is Probable glucan 1,3-beta-glucosidase A (exgA) of Aspergillus terreus (strain NIH 2624 / FGSC A1156).